Reading from the N-terminus, the 200-residue chain is 3-isopropylmalate dehydratase small subunit (200 aa).

Belongs to the LeuD family. LeuD type 1 subfamily. As to quaternary structure, heterodimer of LeuC and LeuD.

The enzyme catalyses (2R,3S)-3-isopropylmalate = (2S)-2-isopropylmalate. Its pathway is amino-acid biosynthesis; L-leucine biosynthesis; L-leucine from 3-methyl-2-oxobutanoate: step 2/4. In terms of biological role, catalyzes the isomerization between 2-isopropylmalate and 3-isopropylmalate, via the formation of 2-isopropylmaleate. This Vibrio vulnificus (strain YJ016) protein is 3-isopropylmalate dehydratase small subunit.